A 117-amino-acid chain; its full sequence is UPF0102 protein FTF0898c (117 aa).

It belongs to the UPF0102 family.

The protein is UPF0102 protein FTF0898c of Francisella tularensis subsp. tularensis (strain FSC 198).